The sequence spans 162 residues: 2-amino-4-hydroxy-6-hydroxymethyldihydropteridine pyrophosphokinase (162 aa).

This sequence belongs to the HPPK family.

The catalysed reaction is 6-hydroxymethyl-7,8-dihydropterin + ATP = (7,8-dihydropterin-6-yl)methyl diphosphate + AMP + H(+). It participates in cofactor biosynthesis; tetrahydrofolate biosynthesis; 2-amino-4-hydroxy-6-hydroxymethyl-7,8-dihydropteridine diphosphate from 7,8-dihydroneopterin triphosphate: step 4/4. Its function is as follows. Catalyzes the transfer of pyrophosphate from adenosine triphosphate (ATP) to 6-hydroxymethyl-7,8-dihydropterin, an enzymatic step in folate biosynthesis pathway. This chain is 2-amino-4-hydroxy-6-hydroxymethyldihydropteridine pyrophosphokinase (folK), found in Streptococcus pyogenes serotype M3 (strain ATCC BAA-595 / MGAS315).